We begin with the raw amino-acid sequence, 420 residues long: Putative zinc metalloprotease Lmo1318 (420 aa).

Histidine 18 provides a ligand contact to Zn(2+). Glutamate 19 is a catalytic residue. Histidine 22 is a binding site for Zn(2+). A run of 4 helical transmembrane segments spans residues 172-194 (TIFA…LAFV), 304-326 (NWIV…LDML), 347-369 (VLNW…LPAL), and 393-412 (GIIH…LVTW). The PDZ domain occupies 176 to 267 (GPLFNFILAI…DGKTQDIDVK (92 aa)).

It belongs to the peptidase M50B family. The cofactor is Zn(2+).

Its subcellular location is the cell membrane. This Listeria monocytogenes serovar 1/2a (strain ATCC BAA-679 / EGD-e) protein is Putative zinc metalloprotease Lmo1318.